A 195-amino-acid polypeptide reads, in one-letter code: Inner membrane protein YohC (195 aa).

The Cytoplasmic segment spans residues 1 to 32; it reads MSHVWGLFSHPDREMQVINRENETISHHYTHH. Residues 33 to 55 form a helical membrane-spanning segment; that stretch reads VLLMAAIPVICAFIGTTQIGWNF. Residues 56 to 64 are Periplasmic-facing; the sequence is GDGTILKLS. A helical transmembrane segment spans residues 65-87; the sequence is WFTGLALAVLFYGVMLAGVAVMG. Residues 88-107 lie on the Cytoplasmic side of the membrane; sequence RVIWWMARNYPQRPSLAHCM. A helical transmembrane segment spans residues 108–130; the sequence is VFAGYVATPLFLSGLVALYPLVW. Residues 131 to 134 lie on the Periplasmic side of the membrane; sequence LCAL. A helical membrane pass occupies residues 135-157; sequence VGTVALFYTGYLLYLGIPSFLNI. Residues 158–169 lie on the Cytoplasmic side of the membrane; it reads NKEEGLSFSSST. The helical transmembrane segment at 170–192 threads the bilayer; the sequence is LAIGVLVLEVLLALTVILWGYGY. The Periplasmic segment spans residues 193 to 195; it reads RLF.

The protein localises to the cell inner membrane. This Escherichia coli O6:H1 (strain CFT073 / ATCC 700928 / UPEC) protein is Inner membrane protein YohC (yohC).